Here is a 211-residue protein sequence, read N- to C-terminus: Ribosomal RNA small subunit methyltransferase G (211 aa).

Residues G79, L84, V130–E131, and R145 each bind S-adenosyl-L-methionine.

This sequence belongs to the methyltransferase superfamily. RNA methyltransferase RsmG family.

It is found in the cytoplasm. The catalysed reaction is guanosine(527) in 16S rRNA + S-adenosyl-L-methionine = N(7)-methylguanosine(527) in 16S rRNA + S-adenosyl-L-homocysteine. In terms of biological role, specifically methylates the N7 position of guanine in position 527 of 16S rRNA. The protein is Ribosomal RNA small subunit methyltransferase G of Alteromonas mediterranea (strain DSM 17117 / CIP 110805 / LMG 28347 / Deep ecotype).